A 180-amino-acid polypeptide reads, in one-letter code: Translation initiation factor IF-3 (180 aa).

This sequence belongs to the IF-3 family. Monomer.

The protein localises to the cytoplasm. In terms of biological role, IF-3 binds to the 30S ribosomal subunit and shifts the equilibrium between 70S ribosomes and their 50S and 30S subunits in favor of the free subunits, thus enhancing the availability of 30S subunits on which protein synthesis initiation begins. The protein is Translation initiation factor IF-3 of Pasteurella multocida (strain Pm70).